The sequence spans 589 residues: TAF5-like RNA polymerase II p300/CBP-associated factor-associated factor 65 kDa subunit 5L (589 aa).

WD repeat units lie at residues 266-305, 340-379, 382-421, 424-463, 466-505, and 508-547; these read NTEQ…LKSE, GHCG…NTVL, GHAY…PLRI, GHLA…SVRL, GHRG…LFKE, and GHTD…CNTP.

It belongs to the WD repeat TAF5 family. The PCAF complex is composed of a number of TBP-associated factors (TAFS), such as TAF5, TAF5L, TAF6, TAF6L, TAF9, TAF10 and TAF12, PCAF, and also PCAF-associated factors (PAFs), such as TADA2L/ADA2, TADA3L/ADA3 and SPT3. Component of the STAGA transcription coactivator-HAT complex, at least composed of SUPT3H, GCN5L2, TAF5L, TAF6L, SUPT7L, TADA3L, TAD1L, TAF10, TAF12, TRRAP and TAF9.

Its subcellular location is the nucleus. Functions as a component of the PCAF complex. The PCAF complex is capable of efficiently acetylating histones in a nucleosomal context. The PCAF complex could be considered as the human version of the yeast SAGA complex. With TAF6L, acts as an epigenetic regulator essential for somatic reprogramming. Regulates target genes through H3K9ac deposition and MYC recruitment which trigger MYC regulatory network to orchestrate gene expression programs to control embryonic stem cell state. This is TAF5-like RNA polymerase II p300/CBP-associated factor-associated factor 65 kDa subunit 5L from Mus musculus (Mouse).